Here is an 822-residue protein sequence, read N- to C-terminus: Outer dense fiber protein 2 (822 aa).

The tract at residues lysine 26–glycine 45 is disordered. Coiled coils occupy residues cysteine 113 to alanine 418, aspartate 452 to aspartate 490, and methionine 516 to glutamine 796.

This sequence belongs to the ODF2 family. Self-associates. Associates with microtubules and forms a fibrillar structure partially linked to the microtubule network.

It localises to the cytoplasm. The protein resides in the cytoskeleton. It is found in the microtubule organizing center. Its subcellular location is the centrosome. The protein localises to the cell projection. It localises to the cilium. The protein resides in the centriole. It is found in the spindle pole. Its subcellular location is the flagellum. Its function is as follows. Seems to be a major component of sperm tail outer dense fibers (ODF). ODFs are filamentous structures located on the outside of the axoneme in the midpiece and principal piece of the mammalian sperm tail and may help to maintain the passive elastic structures and elastic recoil of the sperm tail. The sequence is that of Outer dense fiber protein 2 (ODF2) from Gallus gallus (Chicken).